Reading from the N-terminus, the 127-residue chain is Major sperm protein 2 (127 aa).

Ala-2 carries the N-acetylalanine modification. An MSP domain is found at Asp-9–Asn-126.

As to expression, sperm.

The protein localises to the cell projection. It localises to the pseudopodium. It is found in the cytoplasm. Its subcellular location is the cytoskeleton. In terms of biological role, central component in molecular interactions underlying sperm crawling. Forms an extensive filament system that extends from sperm villipoda, along the leading edge of the pseudopod. In Onchocerca volvulus, this protein is Major sperm protein 2.